The primary structure comprises 208 residues: Small ribosomal subunit protein uS4 (208 aa).

The S4 RNA-binding domain maps to 98–164 (SRLDNVVYRM…DRIKFALELA (67 aa)).

It belongs to the universal ribosomal protein uS4 family. Part of the 30S ribosomal subunit. Contacts protein S5. The interaction surface between S4 and S5 is involved in control of translational fidelity.

One of the primary rRNA binding proteins, it binds directly to 16S rRNA where it nucleates assembly of the body of the 30S subunit. Its function is as follows. With S5 and S12 plays an important role in translational accuracy. This Nitrosococcus oceani (strain ATCC 19707 / BCRC 17464 / JCM 30415 / NCIMB 11848 / C-107) protein is Small ribosomal subunit protein uS4.